The sequence spans 598 residues: NADH-quinone oxidoreductase subunit C/D (598 aa).

The tract at residues methionine 1–glutamine 189 is NADH dehydrogenase I subunit C. Positions aspartate 213–arginine 598 are NADH dehydrogenase I subunit D.

It in the N-terminal section; belongs to the complex I 30 kDa subunit family. This sequence in the C-terminal section; belongs to the complex I 49 kDa subunit family. In terms of assembly, NDH-1 is composed of 13 different subunits. Subunits NuoB, CD, E, F, and G constitute the peripheral sector of the complex.

The protein localises to the cell inner membrane. The enzyme catalyses a quinone + NADH + 5 H(+)(in) = a quinol + NAD(+) + 4 H(+)(out). Its function is as follows. NDH-1 shuttles electrons from NADH, via FMN and iron-sulfur (Fe-S) centers, to quinones in the respiratory chain. The immediate electron acceptor for the enzyme in this species is believed to be ubiquinone. Couples the redox reaction to proton translocation (for every two electrons transferred, four hydrogen ions are translocated across the cytoplasmic membrane), and thus conserves the redox energy in a proton gradient. This Edwardsiella ictaluri (strain 93-146) protein is NADH-quinone oxidoreductase subunit C/D.